The primary structure comprises 369 residues: MTKTIVVKIGTSSLTQPETGQLALSTIATLAETLSYLRQQGNQVILVSSGAVGVGCARLGLTERPKAIALKQAVAAVGQGRLMRVYDDLFTTLQQPIAQVLLTRSDLVQRSRYLNVYNTFRELLALGVIPVVNENDTVAVDELKFGDNDTLSALVASLVEADWLFLLTDVDRLYSADPRSVPDARPISLVTSIKELADLQVQTGSQGSQWGTGGMMTKISAARIAIAAGVRTVITQGRYPRNIEKIIQGELIGTHFQPQPEPTSARKRWIAYGLVPTGKLYLDSGAIAAIVKAGKSLLPAGVKTVAGEFEPQDAVQLLDPQGNEIARGLVNYSSKDLQQICGRHSKEISTILGYVGAETVIHRDNLVLT.

Position 8 (K8) interacts with ATP. S49, D136, and N148 together coordinate substrate. ATP contacts are provided by residues 168 to 169 (TD) and 212 to 218 (TGGMMTK). Residues 277-355 (TGKLYLDSGA…KEISTILGYV (79 aa)) form the PUA domain.

The protein belongs to the glutamate 5-kinase family.

The protein resides in the cytoplasm. The enzyme catalyses L-glutamate + ATP = L-glutamyl 5-phosphate + ADP. The protein operates within amino-acid biosynthesis; L-proline biosynthesis; L-glutamate 5-semialdehyde from L-glutamate: step 1/2. Functionally, catalyzes the transfer of a phosphate group to glutamate to form L-glutamate 5-phosphate. In Trichormus variabilis (strain ATCC 29413 / PCC 7937) (Anabaena variabilis), this protein is Glutamate 5-kinase.